The primary structure comprises 186 residues: Ribosome-recycling factor (186 aa).

Belongs to the RRF family.

The protein resides in the cytoplasm. Functionally, responsible for the release of ribosomes from messenger RNA at the termination of protein biosynthesis. May increase the efficiency of translation by recycling ribosomes from one round of translation to another. This chain is Ribosome-recycling factor, found in Pelodictyon phaeoclathratiforme (strain DSM 5477 / BU-1).